Reading from the N-terminus, the 294-residue chain is 2-methoxy-6-polyprenyl-1,4-benzoquinol methylase, mitochondrial (294 aa).

The transit peptide at 1-10 (MALRSAAGRL) directs the protein to the mitochondrion. S-adenosyl-L-methionine contacts are provided by residues T100, D136, and 166-167 (DA).

It belongs to the class I-like SAM-binding methyltransferase superfamily. MenG/UbiE family. As to quaternary structure, component of a multi-subunit COQ enzyme complex.

It is found in the mitochondrion inner membrane. It carries out the reaction a 2-methoxy-6-(all-trans-polyprenyl)benzene-1,4-diol + S-adenosyl-L-methionine = a 5-methoxy-2-methyl-3-(all-trans-polyprenyl)benzene-1,4-diol + S-adenosyl-L-homocysteine + H(+). It participates in cofactor biosynthesis; ubiquinone biosynthesis. Its function is as follows. Methyltransferase required for the conversion of 2-polyprenyl-6-methoxy-1,4-benzoquinol (DDMQH2) to 2-polyprenyl-3-methyl-6-methoxy-1,4-benzoquinol (DMQH2). This chain is 2-methoxy-6-polyprenyl-1,4-benzoquinol methylase, mitochondrial, found in Oryza sativa subsp. japonica (Rice).